The following is a 310-amino-acid chain: Tagatose-6-phosphate kinase (310 aa).

Belongs to the carbohydrate kinase PfkB family. LacC subfamily.

The catalysed reaction is D-tagatofuranose 6-phosphate + ATP = D-tagatofuranose 1,6-bisphosphate + ADP + H(+). The protein operates within carbohydrate metabolism; D-tagatose 6-phosphate degradation; D-glyceraldehyde 3-phosphate and glycerone phosphate from D-tagatose 6-phosphate: step 1/2. The polypeptide is Tagatose-6-phosphate kinase (Staphylococcus epidermidis (strain ATCC 12228 / FDA PCI 1200)).